A 117-amino-acid chain; its full sequence is Large ribosomal subunit protein bL20c (117 aa).

This sequence belongs to the bacterial ribosomal protein bL20 family.

It is found in the plastid. It localises to the chloroplast. Binds directly to 23S ribosomal RNA and is necessary for the in vitro assembly process of the 50S ribosomal subunit. It is not involved in the protein synthesizing functions of that subunit. The sequence is that of Large ribosomal subunit protein bL20c (rpl20) from Arabidopsis thaliana (Mouse-ear cress).